A 248-amino-acid chain; its full sequence is Small ribosomal subunit protein uS3 (248 aa).

Residues 38–106 (IREFLSKGLD…QVALNILEVK (69 aa)) enclose the KH type-2 domain. A compositionally biased stretch (basic and acidic residues) spans 214 to 230 (SEINAPAERRGRGDRNA). Residues 214-248 (SEINAPAERRGRGDRNARPRRGGQRRQRAEQKQEG) form a disordered region.

The protein belongs to the universal ribosomal protein uS3 family. In terms of assembly, part of the 30S ribosomal subunit. Forms a tight complex with proteins S10 and S14.

In terms of biological role, binds the lower part of the 30S subunit head. Binds mRNA in the 70S ribosome, positioning it for translation. This Corynebacterium glutamicum (strain R) protein is Small ribosomal subunit protein uS3.